The chain runs to 89 residues: Bombyxin B-2 (89 aa).

Positions 1–19 (MKTSVMFMLVFVISLMCSS) are cleaved as a signal peptide. Cystine bridges form between Cys29–Cys75, Cys41–Cys88, and Cys74–Cys79. Positions 48 to 66 (SGAQYAPYFWTRQYLGSRG) are cleaved as a propeptide — c peptide like.

This sequence belongs to the insulin family. In terms of assembly, heterodimer of a B chain and an A chain linked by two disulfide bonds.

The protein resides in the secreted. Brain peptide responsible for activation of prothoracic glands to produce ecdysone in insects. The chain is Bombyxin B-2 (BBXB2) from Bombyx mori (Silk moth).